Here is a 122-residue protein sequence, read N- to C-terminus: Urease subunit beta (122 aa).

Belongs to the urease beta subunit family. Heterotrimer of UreA (gamma), UreB (beta) and UreC (alpha) subunits. Three heterotrimers associate to form the active enzyme.

The protein localises to the cytoplasm. It catalyses the reaction urea + 2 H2O + H(+) = hydrogencarbonate + 2 NH4(+). The protein operates within nitrogen metabolism; urea degradation; CO(2) and NH(3) from urea (urease route): step 1/1. This chain is Urease subunit beta, found in Lysinibacillus sphaericus (strain C3-41).